Consider the following 346-residue polypeptide: D-alanine--D-alanine ligase A (346 aa).

In terms of domain architecture, ATP-grasp spans 138–332 (KRLFLAAGVE…FAELCERICR (195 aa)). 164-217 (QLGFPLVVKPNSQGSTVGLSIVHSQAELQPAIELAGRYGDEVMLERFVAGREVT) contacts ATP. Residues aspartate 286, glutamate 299, and asparagine 301 each contribute to the Mg(2+) site.

Belongs to the D-alanine--D-alanine ligase family. It depends on Mg(2+) as a cofactor. Requires Mn(2+) as cofactor.

It localises to the cytoplasm. It carries out the reaction 2 D-alanine + ATP = D-alanyl-D-alanine + ADP + phosphate + H(+). The protein operates within cell wall biogenesis; peptidoglycan biosynthesis. Cell wall formation. This Pseudomonas aeruginosa (strain ATCC 15692 / DSM 22644 / CIP 104116 / JCM 14847 / LMG 12228 / 1C / PRS 101 / PAO1) protein is D-alanine--D-alanine ligase A.